Here is a 96-residue protein sequence, read N- to C-terminus: Keratin-associated protein 12-1 (96 aa).

14 consecutive repeat copies span residues 10 to 14 (CQPAC), 15 to 19 (CAPSP), 24 to 28 (CYIPV), 30 to 34 (CQSSV), 35 to 39 (CVPVS), 45 to 49 (CVPVR), 50 to 54 (CQSSV), 55 to 59 (CVPVS), 60 to 64 (CRPVV), 70 to 74 (CQSSG), 75 to 79 (CCQPS), 80 to 84 (CTSVL), 85 to 89 (CRPIS), and 90 to 94 (CSTPS). Residues 10 to 94 (CQPACCAPSP…CRPISCSTPS (85 aa)) form a 14 X 5 AA approximate repeats region.

This sequence belongs to the KRTAP type 12 family. As to quaternary structure, interacts with hair keratins. In terms of tissue distribution, restricted to a narrow region of the hair fiber cuticle, lying approximately 20 cell layers above the apex of the dermal papilla of the hair root; not detected in any other tissues.

In the hair cortex, hair keratin intermediate filaments are embedded in an interfilamentous matrix, consisting of hair keratin-associated proteins (KRTAP), which are essential for the formation of a rigid and resistant hair shaft through their extensive disulfide bond cross-linking with abundant cysteine residues of hair keratins. The matrix proteins include the high-sulfur and high-glycine-tyrosine keratins. The sequence is that of Keratin-associated protein 12-1 (KRTAP12-1) from Homo sapiens (Human).